The primary structure comprises 158 residues: Succinate dehydrogenase assembly factor 2, mitochondrial (158 aa).

Residues 1–17 (MFSANIARKVVCSVCRA) constitute a mitochondrion transit peptide.

Belongs to the SDHAF2 family. As to quaternary structure, interacts with sdha within the SDH catalytic dimer.

It is found in the mitochondrion matrix. Functionally, plays an essential role in the assembly of succinate dehydrogenase (SDH), an enzyme complex (also referred to as respiratory complex II) that is a component of both the tricarboxylic acid (TCA) cycle and the mitochondrial electron transport chain, and which couples the oxidation of succinate to fumarate with the reduction of ubiquinone (coenzyme Q) to ubiquinol. Required for flavinylation (covalent attachment of FAD) of the flavoprotein subunit sdha of the SDH catalytic dimer. The sequence is that of Succinate dehydrogenase assembly factor 2, mitochondrial from Danio rerio (Zebrafish).